A 248-amino-acid chain; its full sequence is Large ribosomal subunit protein uL4 (248 aa).

The interval 69-92 (HVPRLKNGSRAAKVPQAKGGREAH) is disordered.

Belongs to the universal ribosomal protein uL4 family. Part of the 50S ribosomal subunit.

In terms of biological role, one of the primary rRNA binding proteins, this protein initially binds near the 5'-end of the 23S rRNA. It is important during the early stages of 50S assembly. It makes multiple contacts with different domains of the 23S rRNA in the assembled 50S subunit and ribosome. Forms part of the polypeptide exit tunnel. This Methanoregula boonei (strain DSM 21154 / JCM 14090 / 6A8) protein is Large ribosomal subunit protein uL4.